The primary structure comprises 180 residues: NADH-quinone oxidoreductase subunit I (180 aa).

4Fe-4S ferredoxin-type domains are found at residues 44-74 (LNRYPDGLEKCIGCELCAWACPADAIYVEGA) and 90-119 (RVYQINYLRCIGCGLCIEACPTRALTMTTE). Residues Cys-54, Cys-57, Cys-60, Cys-64, Cys-99, Cys-102, Cys-105, and Cys-109 each coordinate [4Fe-4S] cluster. The disordered stretch occupies residues 145 to 180 (MQAPPHDMAPGKTDDDYYLGNVTPITPVPSGTEDAR).

It belongs to the complex I 23 kDa subunit family. NDH-1 is composed of 14 different subunits. Subunits NuoA, H, J, K, L, M, N constitute the membrane sector of the complex. The cofactor is [4Fe-4S] cluster.

It localises to the cell membrane. The enzyme catalyses a quinone + NADH + 5 H(+)(in) = a quinol + NAD(+) + 4 H(+)(out). Functionally, NDH-1 shuttles electrons from NADH, via FMN and iron-sulfur (Fe-S) centers, to quinones in the respiratory chain. The immediate electron acceptor for the enzyme in this species is believed to be menaquinone. Couples the redox reaction to proton translocation (for every two electrons transferred, four hydrogen ions are translocated across the cytoplasmic membrane), and thus conserves the redox energy in a proton gradient. The polypeptide is NADH-quinone oxidoreductase subunit I (Mycolicibacterium smegmatis (strain ATCC 700084 / mc(2)155) (Mycobacterium smegmatis)).